Consider the following 297-residue polypeptide: Molybdate/tungstate import ATP-binding protein WtpC (297 aa).

The region spanning 2–226 (LKVNNLSKIW…PKNKKVAEFL (225 aa)) is the ABC transporter domain. 32 to 39 (GPSGAGKS) is an ATP binding site.

Belongs to the ABC transporter superfamily. Sulfate/tungstate importer (TC 3.A.1.6) family. In terms of assembly, the complex is composed of two ATP-binding proteins (WtpC), two transmembrane proteins (WtpB) and a solute-binding protein (WtpA).

The protein localises to the cell membrane. It catalyses the reaction tungstate(in) + ATP + H2O = tungstate(out) + ADP + phosphate + H(+). In terms of biological role, part of the ABC transporter complex WtpABC involved in molybdate/tungstate import. Responsible for energy coupling to the transport system. The chain is Molybdate/tungstate import ATP-binding protein WtpC (wtpC) from Methanocaldococcus jannaschii (strain ATCC 43067 / DSM 2661 / JAL-1 / JCM 10045 / NBRC 100440) (Methanococcus jannaschii).